The primary structure comprises 64 residues: Enteric beta-defensin (64 aa).

A signal peptide spans 1-26 (MRLHHLLLTLLFLVLSAGSGFTQGIS). Cystine bridges form between C31-C60, C38-C53, and C43-C61.

The protein belongs to the beta-defensin family. LAP/TAP subfamily. As to expression, inducibly expressed in enteric epithelial cells.

Its subcellular location is the secreted. Has antibacterial activity. In Bos taurus (Bovine), this protein is Enteric beta-defensin (EBD).